A 63-amino-acid polypeptide reads, in one-letter code: Large ribosomal subunit protein uL29 (63 aa).

It belongs to the universal ribosomal protein uL29 family.

This Erwinia tasmaniensis (strain DSM 17950 / CFBP 7177 / CIP 109463 / NCPPB 4357 / Et1/99) protein is Large ribosomal subunit protein uL29.